Reading from the N-terminus, the 604-residue chain is uncharacterized protein (604 aa).

The protein belongs to the glycosyltransferase 2 family.

This is an uncharacterized protein from Rickettsia conorii (strain ATCC VR-613 / Malish 7).